Here is a 1649-residue protein sequence, read N- to C-terminus: DNA-directed RNA polymerase subunit beta' (1649 aa).

Zn(2+) contacts are provided by cysteine 62, cysteine 64, cysteine 77, and cysteine 80. Mg(2+) contacts are provided by aspartate 746, aspartate 748, and aspartate 750. 4 residues coordinate Zn(2+): cysteine 1077, cysteine 1268, cysteine 1275, and cysteine 1278.

This sequence belongs to the RNA polymerase beta' chain family. In terms of assembly, the RNAP catalytic core consists of 2 alpha, 1 beta, 1 beta' and 1 omega subunit. When a sigma factor is associated with the core the holoenzyme is formed, which can initiate transcription. The cofactor is Mg(2+). Zn(2+) serves as cofactor.

It carries out the reaction RNA(n) + a ribonucleoside 5'-triphosphate = RNA(n+1) + diphosphate. Its function is as follows. DNA-dependent RNA polymerase catalyzes the transcription of DNA into RNA using the four ribonucleoside triphosphates as substrates. The polypeptide is DNA-directed RNA polymerase subunit beta' (Thermosipho africanus (strain TCF52B)).